We begin with the raw amino-acid sequence, 285 residues long: N(G),N(G)-dimethylarginine dimethylaminohydrolase 1 (285 aa).

N-acetylalanine is present on Ala2. Leu30 contributes to the substrate binding site. Ser33 is modified (phosphoserine). Substrate-binding residues include Asp73, Glu78, Asp79, Arg98, and Arg145. His173 (proton donor) is an active-site residue. Cys222 bears the S-nitrosocysteine mark. Val268 is a substrate binding site. Cys274 bears the S-nitrosocysteine mark. The active-site Nucleophile is Cys274. Residue Cys274 coordinates Zn(2+).

Belongs to the DDAH family. Monomer. Detected in skeletal muscle, lung, heart, liver, kidney and brain (at protein level).

The enzyme catalyses N(omega),N(omega)-dimethyl-L-arginine + H2O = dimethylamine + L-citrulline. It carries out the reaction N(omega)-methyl-L-arginine + H2O = L-citrulline + methylamine. Inhibited by zinc ions. Hydrolyzes N(G),N(G)-dimethyl-L-arginine (ADMA) and N(G)-monomethyl-L-arginine (MMA) which act as inhibitors of NOS. Has therefore a role in the regulation of nitric oxide generation. The chain is N(G),N(G)-dimethylarginine dimethylaminohydrolase 1 (Ddah1) from Mus musculus (Mouse).